Reading from the N-terminus, the 595-residue chain is Arginine--tRNA ligase (595 aa).

The 'HIGH' region motif lies at 132–142 (ANPTGPLHVGH).

This sequence belongs to the class-I aminoacyl-tRNA synthetase family. As to quaternary structure, monomer.

It is found in the cytoplasm. It catalyses the reaction tRNA(Arg) + L-arginine + ATP = L-arginyl-tRNA(Arg) + AMP + diphosphate. The polypeptide is Arginine--tRNA ligase (Cupriavidus necator (strain ATCC 17699 / DSM 428 / KCTC 22496 / NCIMB 10442 / H16 / Stanier 337) (Ralstonia eutropha)).